The primary structure comprises 136 residues: Transcription antitermination protein NusB (136 aa).

This sequence belongs to the NusB family.

Functionally, involved in transcription antitermination. Required for transcription of ribosomal RNA (rRNA) genes. Binds specifically to the boxA antiterminator sequence of the ribosomal RNA (rrn) operons. The polypeptide is Transcription antitermination protein NusB (Pseudarthrobacter chlorophenolicus (strain ATCC 700700 / DSM 12829 / CIP 107037 / JCM 12360 / KCTC 9906 / NCIMB 13794 / A6) (Arthrobacter chlorophenolicus)).